The sequence spans 397 residues: Alanine racemase, biosynthetic (397 aa).

The active-site Proton acceptor; specific for D-alanine is lysine 42. An N6-(pyridoxal phosphate)lysine modification is found at lysine 42. Position 136 (arginine 136) interacts with substrate. Tyrosine 257 serves as the catalytic Proton acceptor; specific for L-alanine. Methionine 305 contributes to the substrate binding site. A disordered region spans residues 373–397 (ANRPTEAMSNPSRAKSRPMDKQALI).

This sequence belongs to the alanine racemase family. Pyridoxal 5'-phosphate is required as a cofactor.

The catalysed reaction is L-alanine = D-alanine. It participates in amino-acid biosynthesis; D-alanine biosynthesis; D-alanine from L-alanine: step 1/1. Its pathway is cell wall biogenesis; peptidoglycan biosynthesis. Catalyzes the interconversion of L-alanine and D-alanine. Provides the D-alanine required for cell wall biosynthesis. The chain is Alanine racemase, biosynthetic (alr) from Mesorhizobium japonicum (strain LMG 29417 / CECT 9101 / MAFF 303099) (Mesorhizobium loti (strain MAFF 303099)).